Reading from the N-terminus, the 528-residue chain is MLSKATLLLFLPSWARVTYAAFGITTTSSSYVIDANSPNPLKFTVNRSNCDITSINFYGAELQYQGTGSHIGSGLGSASVSATQSGDYIKVTCSTSTLTHYFVVHNGDPIIHMATYITAEPSIGELRFIARLNNELLPNEEPFGEVSNTSGGTAIEGSDVFLVNGQTRSKFYSSERFIDDHRHCVSGSAHRVCMILNQYESSSGGPFHRDINTNNGGQYNALYWYMNSGHVQTEANRMGLHGPYSMYFSRSGTPGTNIDTSFFANLDIQGYVPDSARGKVSGKASGADSTFKWVVHWYNDEAQYWTYTASDGSFTSPAMKPGTYTMVYYQGEYKVASTSVSVSAGSTTTKNISGSVTTGKTIFKIGEWDGQPTGFRNAANQLRMHPSDSRMSSWGPLTYTVGSSSLSDFPMAIFKSVNSPVTIKFTASSSQTGAATLRIGTTLSFAGGRPQVTVNSWTGPIPSAPKDLNSRGVTRGAYRGLGEVYDVAIPAGTIVAGTNTITISVVSGSSGDAFLSPNFIFDCVELFQ.

Residues 1–20 form the signal peptide; sequence MLSKATLLLFLPSWARVTYA. N-linked (GlcNAc...) asparagine glycosylation is present at Asn-46. Cys-50 and Cys-93 are joined by a disulfide. Asn-148 carries an N-linked (GlcNAc...) asparagine glycan. Cys-184 and Cys-193 are oxidised to a cystine. An N-linked (GlcNAc...) asparagine glycan is attached at Asn-351.

This sequence belongs to the polysaccharide lyase 4 family.

It localises to the secreted. The catalysed reaction is Endotype eliminative cleavage of L-alpha-rhamnopyranosyl-(1-&gt;4)-alpha-D-galactopyranosyluronic acid bonds of rhamnogalacturonan I domains in ramified hairy regions of pectin leaving L-rhamnopyranose at the reducing end and 4-deoxy-4,5-unsaturated D-galactopyranosyluronic acid at the non-reducing end.. Functionally, pectinolytic enzymes consist of four classes of enzymes: pectin lyase, polygalacturonase, pectin methylesterase and rhamnogalacturonase. Degrades the rhamnogalacturonan I (RG-I) backbone of pectin. This chain is Probable rhamnogalacturonate lyase A (rglA), found in Aspergillus fumigatus (strain CBS 144.89 / FGSC A1163 / CEA10) (Neosartorya fumigata).